The chain runs to 863 residues: Leucine--tRNA ligase (863 aa).

The 'HIGH' region motif lies at 41–51 (PYPSGRIHIGH). The 'KMSKS' region signature appears at 627–631 (KMSKS). Position 630 (K630) interacts with ATP.

The protein belongs to the class-I aminoacyl-tRNA synthetase family.

It localises to the cytoplasm. It carries out the reaction tRNA(Leu) + L-leucine + ATP = L-leucyl-tRNA(Leu) + AMP + diphosphate. The sequence is that of Leucine--tRNA ligase from Jannaschia sp. (strain CCS1).